We begin with the raw amino-acid sequence, 670 residues long: DNA ligase (670 aa).

NAD(+) contacts are provided by residues 32-36 (DAYYD), 81-82 (SL), and E110. The active-site N6-AMP-lysine intermediate is K112. Residues R133, E170, K289, and K313 each coordinate NAD(+). Zn(2+)-binding residues include C407, C410, C425, and C431. The BRCT domain maps to 590–670 (EDELRLKGQT…ELLVFLGLAG (81 aa)).

The protein belongs to the NAD-dependent DNA ligase family. LigA subfamily. Requires Mg(2+) as cofactor. Mn(2+) serves as cofactor.

The catalysed reaction is NAD(+) + (deoxyribonucleotide)n-3'-hydroxyl + 5'-phospho-(deoxyribonucleotide)m = (deoxyribonucleotide)n+m + AMP + beta-nicotinamide D-nucleotide.. In terms of biological role, DNA ligase that catalyzes the formation of phosphodiester linkages between 5'-phosphoryl and 3'-hydroxyl groups in double-stranded DNA using NAD as a coenzyme and as the energy source for the reaction. It is essential for DNA replication and repair of damaged DNA. The chain is DNA ligase from Shewanella denitrificans (strain OS217 / ATCC BAA-1090 / DSM 15013).